Consider the following 137-residue polypeptide: GEL complex subunit OPTI (137 aa).

Residues 1–44 (MSGGRRKEEPPQPQLANGALKVSVWSKVLRSDAAWEDKDEFLDV) lie on the Cytoplasmic side of the membrane. A helical transmembrane segment spans residues 45–65 (IYWFRQIIAVVLGVIWGVLPL). Position 66 (Arg66) is a topological domain, lumenal. The helical transmembrane segment at 67–84 (GFLGIAGFCLINAGVLYL) threads the bilayer. The Cytoplasmic portion of the chain corresponds to 85 to 103 (YFSNYLQIDEEEYGGTWEL). Residues 104–127 (TKEGFMTSFALFMVCVADSFTTGH) form a helical membrane-spanning segment. The Lumenal segment spans residues 128-137 (LDHLLHCHPL).

It belongs to the EMC6 family. In terms of assembly, component of the GET- and EMC-like (GEL) complex, composed of RAB5IF/OPTI and TMCO1. The GEL complex is part of the multi-pass translocon (MPT) complex, composed of three subcomplexes, the GEL complex (composed of RAB5IF/OPTI and TMCO1), the BOS complex (composed of NCLN/Nicalin, NOMO and TMEM147) and the PAT complex (composed of WDR83OS/Asterix and CCDC47). The MPT complex associates with the SEC61 complex. Interacts with NDUFS3, NDUFA4, NDUFV1, NDUFA9 and NDUFS8 of the mitochondrial membrane respiratory chain NADH dehydrogenase (Complex I). Interacts with UQCRC2 of the ubiquinol-cytochrome c reductase complex (Complex III). Interacts with COX5A and COX7C of the cytochrome c oxidase complex (Complex IV). In terms of tissue distribution, expressed in embryonic stem cells and differentiated neuronal cells.

Its subcellular location is the endoplasmic reticulum membrane. It localises to the mitochondrion inner membrane. Functionally, component of the multi-pass translocon (MPT) complex that mediates insertion of multi-pass membrane proteins into the lipid bilayer of membranes. The MPT complex takes over after the SEC61 complex: following membrane insertion of the first few transmembrane segments of proteins by the SEC61 complex, the MPT complex occludes the lateral gate of the SEC61 complex to promote insertion of subsequent transmembrane regions. Within the MPT complex, the GEL subcomplex may mediate insertion of transmembrane regions into the membrane. In addition to its role in multi-pass membrane insertion, RAB5IF/OPTI also acts as an assembly factor for mitochondrial respiratory complexes. In Homo sapiens (Human), this protein is GEL complex subunit OPTI.